An 862-amino-acid polypeptide reads, in one-letter code: Rab GTPase-binding effector protein 1 (862 aa).

A2 bears the N-acetylalanine mark. The stretch at 11 to 345 (DVSLQQRVAE…KKTDTEEEVK (335 aa)) forms a coiled coil. N6-acetyllysine is present on K282. Residues 315 to 374 (ELKKKDQEEDEQQRVNKRKDNKKTDTEEEVKIPVVCALTQEESSTPLSNEEEHLDSTHGS) form a disordered region. Basic and acidic residues predominate over residues 336–345 (KKTDTEEEVK). Phosphoserine occurs at positions 374, 377, and 407. A Phosphothreonine modification is found at T408. At S410 the chain carries Phosphoserine. Residues 534 to 816 (DMCSNYEKQL…LQTELDVSEQ (283 aa)) are a coiled coil.

It belongs to the rabaptin family. As to quaternary structure, heterodimer with RABGEF1. The heterodimer binds RAB4A and RAB5A that have been activated by GTP-binding. Interacts with TSC2. Interacts with GGA1 (via GAE domain), GGA2 (via GAE domain) and GGA3 (via GAE domain). Interacts with AP1G1 (via GAE domain). Interacts with AP1G2 (via GAE domain). Interacts with ECPAS. Interacts with KCNH1. Interacts with PKD1 (via C-terminal domain) and GGA1; the interactions recruit PKD1:PKD2 complex to GGA1 and ARL3 at trans-Golgi network. Interacts with KCNH1. Proteolytic cleavage by caspases in apoptotic cells causes loss of endosome fusion activity.

The protein resides in the cytoplasm. It is found in the early endosome. Its subcellular location is the recycling endosome. The protein localises to the cytoplasmic vesicle. Rab effector protein acting as linker between gamma-adaptin, RAB4A and RAB5A. Involved in endocytic membrane fusion and membrane trafficking of recycling endosomes. Involved in KCNH1 channels trafficking to and from the cell membrane. Stimulates RABGEF1 mediated nucleotide exchange on RAB5A. Mediates the traffic of PKD1:PKD2 complex from the endoplasmic reticulum through the Golgi to the cilium. This is Rab GTPase-binding effector protein 1 (Rabep1) from Mus musculus (Mouse).